The sequence spans 278 residues: S-formylglutathione hydrolase YeiG (278 aa).

Residues Ser145, Asp223, and His256 each act as charge relay system in the active site.

It belongs to the esterase D family.

It catalyses the reaction S-formylglutathione + H2O = formate + glutathione + H(+). Functionally, serine hydrolase involved in the detoxification of formaldehyde. Hydrolyzes S-formylglutathione to glutathione and formate. The chain is S-formylglutathione hydrolase YeiG (yeiG) from Shigella dysenteriae serotype 1 (strain Sd197).